The following is a 406-amino-acid chain: Succinylornithine transaminase (406 aa).

An N6-(pyridoxal phosphate)lysine modification is found at lysine 252.

It belongs to the class-III pyridoxal-phosphate-dependent aminotransferase family. AstC subfamily. The cofactor is pyridoxal 5'-phosphate.

It carries out the reaction N(2)-succinyl-L-ornithine + 2-oxoglutarate = N-succinyl-L-glutamate 5-semialdehyde + L-glutamate. Its pathway is amino-acid degradation; L-arginine degradation via AST pathway; L-glutamate and succinate from L-arginine: step 3/5. In terms of biological role, catalyzes the transamination of N(2)-succinylornithine and alpha-ketoglutarate into N(2)-succinylglutamate semialdehyde and glutamate. Can also act as an acetylornithine aminotransferase. The protein is Succinylornithine transaminase of Escherichia coli (strain SMS-3-5 / SECEC).